Consider the following 385-residue polypeptide: MGILGLSKLIADLAPQAIRESEMKHFFGRKVAIDASMCLYQFLIAVRSEGAQLATVNGDPTSHLMGMFYRTIRLLDNGIKPVYVFDGKPPDLKSGELAKRAERREEAEKALKAATDAGDDAGIEKFNRRLVRVTKEHAKEAKELLTLMGVPYVDAPCEAEAQCAALVKAGKVYATATEDMDALTFGSTKLLRYLTYSEARKMPVKEFSYDKLLEGLAINNREFIDLCILLGCDYCESIKGIGPKRAIELINTYRDIETILDNLDSSKYTVPENWNYKVARELFIEPEVADADSIDLKWVEPDEEGLVKFLCGDRQFNEERVRNGAKKLMKSKQAQTQVRLDSFFKTLPSTPNATNAAKRKAEEAKKSANNKKAKTSGGGRGRRPK.

Residues 1-104 are N-domain; it reads MGILGLSKLI…GELAKRAERR (104 aa). Mg(2+) is bound at residue D34. Residues R47 and R70 each contribute to the DNA site. 5 residues coordinate Mg(2+): D86, E158, E160, D179, and D181. Residues 122–253 are I-domain; it reads GIEKFNRRLV…KRAIELINTY (132 aa). E158 contributes to the DNA binding site. DNA-binding residues include G231 and D233. Residue D233 coordinates Mg(2+). The tract at residues 336-344 is interaction with PCNA; it reads TQVRLDSFF. Residues 346–385 form a disordered region; the sequence is TLPSTPNATNAAKRKAEEAKKSANNKKAKTSGGGRGRRPK. Residues 368–385 are compositionally biased toward basic residues; it reads ANNKKAKTSGGGRGRRPK.

The protein belongs to the XPG/RAD2 endonuclease family. FEN1 subfamily. In terms of assembly, interacts with PCNA. Three molecules of FEN1 bind to one PCNA trimer with each molecule binding to one PCNA monomer. PCNA stimulates the nuclease activity without altering cleavage specificity. Mg(2+) is required as a cofactor. Phosphorylated. Phosphorylation upon DNA damage induces relocalization to the nuclear plasma.

Its subcellular location is the nucleus. The protein localises to the nucleolus. It is found in the nucleoplasm. It localises to the mitochondrion. Structure-specific nuclease with 5'-flap endonuclease and 5'-3' exonuclease activities involved in DNA replication and repair. During DNA replication, cleaves the 5'-overhanging flap structure that is generated by displacement synthesis when DNA polymerase encounters the 5'-end of a downstream Okazaki fragment. It enters the flap from the 5'-end and then tracks to cleave the flap base, leaving a nick for ligation. Also involved in the long patch base excision repair (LP-BER) pathway, by cleaving within the apurinic/apyrimidinic (AP) site-terminated flap. Acts as a genome stabilization factor that prevents flaps from equilibrating into structures that lead to duplications and deletions. Also possesses 5'-3' exonuclease activity on nicked or gapped double-stranded DNA, and exhibits RNase H activity. Also involved in replication and repair of rDNA and in repairing mitochondrial DNA. The sequence is that of Flap endonuclease 1 from Drosophila melanogaster (Fruit fly).